The chain runs to 848 residues: Trimethylamine-N-oxide reductase 1 (848 aa).

The segment at residues methionine 1–alanine 39 is a signal peptide (tat-type signal). Residue serine 191 coordinates Mo-bis(molybdopterin guanine dinucleotide).

It belongs to the prokaryotic molybdopterin-containing oxidoreductase family. It depends on Mo-bis(molybdopterin guanine dinucleotide) as a cofactor. Predicted to be exported by the Tat system. The position of the signal peptide cleavage has not been experimentally proven.

Its subcellular location is the periplasm. It catalyses the reaction trimethylamine + 2 Fe(III)-[cytochrome c] + H2O = trimethylamine N-oxide + 2 Fe(II)-[cytochrome c] + 3 H(+). In terms of biological role, reduces trimethylamine-N-oxide (TMAO) into trimethylamine; an anaerobic reaction coupled to energy-yielding reactions. The protein is Trimethylamine-N-oxide reductase 1 (torA) of Escherichia coli O6:H1 (strain CFT073 / ATCC 700928 / UPEC).